Reading from the N-terminus, the 37-residue chain is Photosystem I reaction center subunit VIII (37 aa).

A helical transmembrane segment spans residues L7 to L27.

The protein belongs to the PsaI family.

It is found in the plastid. It localises to the chloroplast thylakoid membrane. Its function is as follows. May help in the organization of the PsaL subunit. The protein is Photosystem I reaction center subunit VIII of Populus alba (White poplar).